A 231-amino-acid chain; its full sequence is ATP-dependent dethiobiotin synthetase BioD 2 (231 aa).

Residue 13–18 coordinates ATP; it reads SVGKTV. Residue T17 coordinates Mg(2+). Residue K38 is part of the active site. Residues D55, 112–115, 172–173, 201–203, and Q208 contribute to the ATP site; these read EGTG, NR, and PYL. Positions 55 and 112 each coordinate Mg(2+).

The protein belongs to the dethiobiotin synthetase family. In terms of assembly, homodimer. It depends on Mg(2+) as a cofactor.

It is found in the cytoplasm. It catalyses the reaction (7R,8S)-7,8-diammoniononanoate + CO2 + ATP = (4R,5S)-dethiobiotin + ADP + phosphate + 3 H(+). Its pathway is cofactor biosynthesis; biotin biosynthesis; biotin from 7,8-diaminononanoate: step 1/2. Its function is as follows. Catalyzes a mechanistically unusual reaction, the ATP-dependent insertion of CO2 between the N7 and N8 nitrogen atoms of 7,8-diaminopelargonic acid (DAPA, also called 7,8-diammoniononanoate) to form a ureido ring. The chain is ATP-dependent dethiobiotin synthetase BioD 2 from Salmonella typhimurium (strain LT2 / SGSC1412 / ATCC 700720).